We begin with the raw amino-acid sequence, 205 residues long: Recombination protein RecR (205 aa).

The segment at 58 to 75 adopts a C4-type zinc-finger fold; sequence CSVCQNVTDRDADPCYIC. The Toprim domain maps to 83 to 182; sequence SVICVVESPA…SVTKIARGIP (100 aa).

It belongs to the RecR family.

Its function is as follows. May play a role in DNA repair. It seems to be involved in an RecBC-independent recombinational process of DNA repair. It may act with RecF and RecO. In Chlorobium limicola (strain DSM 245 / NBRC 103803 / 6330), this protein is Recombination protein RecR.